We begin with the raw amino-acid sequence, 113 residues long: uncharacterized protein (113 aa).

It to M.jannaschii MJ0886 C-terminal region.

This is an uncharacterized protein from Clostridium pasteurianum.